Consider the following 722-residue polypeptide: Zinc finger BED domain-containing protein RICESLEEPER 1 (722 aa).

Residues 66 to 126 form a BED-type zinc finger; the sequence is RKKSLVWEHF…GSCPKIKNQE (61 aa). Positions 89, 92, 113, and 119 each coordinate Zn(2+). The segment at 572-592 is disordered; sequence VEQGGGNNAPASENSTQATAP. Over residues 580–592 the composition is skewed to polar residues; sequence APASENSTQATAP. Positions 617–702 are HATC (Hobo-Ac-Tam3) domain; sequence ELEQYLDESL…EALVCAKDWL (86 aa).

In terms of assembly, homodimer.

It is found in the nucleus. Its function is as follows. Transposase-like protein that is essential for plant growth and development. May regulate global gene expression by recruiting other cellular factors. In Oryza sativa subsp. japonica (Rice), this protein is Zinc finger BED domain-containing protein RICESLEEPER 1.